We begin with the raw amino-acid sequence, 459 residues long: RuvB-like helicase 1 (459 aa).

Position 75–82 (glycine 75–threonine 82) interacts with ATP.

Belongs to the RuvB family. May form heterododecamers with RVB2. Component of the SWR1 chromatin remodeling complex, the INO80 chromatin remodeling complex, and of the R2TP complex.

The protein resides in the nucleus. The enzyme catalyses ATP + H2O = ADP + phosphate + H(+). DNA helicase which participates in several chromatin remodeling complexes, including the SWR1 and the INO80 complexes. The SWR1 complex mediates the ATP-dependent exchange of histone H2A for the H2A variant HZT1 leading to transcriptional regulation of selected genes by chromatin remodeling. The INO80 complex remodels chromatin by shifting nucleosomes and is involved in DNA repair. Also involved in pre-rRNA processing. The sequence is that of RuvB-like helicase 1 (RVB1) from Eremothecium gossypii (strain ATCC 10895 / CBS 109.51 / FGSC 9923 / NRRL Y-1056) (Yeast).